Reading from the N-terminus, the 252-residue chain is 5-oxoprolinase subunit A (252 aa).

This sequence belongs to the LamB/PxpA family. Forms a complex composed of PxpA, PxpB and PxpC.

The catalysed reaction is 5-oxo-L-proline + ATP + 2 H2O = L-glutamate + ADP + phosphate + H(+). Catalyzes the cleavage of 5-oxoproline to form L-glutamate coupled to the hydrolysis of ATP to ADP and inorganic phosphate. This chain is 5-oxoprolinase subunit A, found in Chloroflexus aggregans (strain MD-66 / DSM 9485).